Here is a 394-residue protein sequence, read N- to C-terminus: Elongation factor Tu 1 (394 aa).

Residues 9 to 204 (KPHCNIGTIG…AIDDYIPQPT (196 aa)) form the tr-type G domain. A G1 region spans residues 18 to 25 (GHVDHGKT). GTP is bound at residue 18–25 (GHVDHGKT). A Mg(2+)-binding site is contributed by threonine 25. The segment at 61 to 65 (GITIQ) is G2. Residues 82–85 (DCPG) are G3. GTP contacts are provided by residues 82 to 86 (DCPGH) and 137 to 140 (NKID). A G4 region spans residues 137–140 (NKID). A G5 region spans residues 174–176 (SAL).

This sequence belongs to the TRAFAC class translation factor GTPase superfamily. Classic translation factor GTPase family. EF-Tu/EF-1A subfamily. Monomer.

The protein localises to the cytoplasm. The enzyme catalyses GTP + H2O = GDP + phosphate + H(+). In terms of biological role, GTP hydrolase that promotes the GTP-dependent binding of aminoacyl-tRNA to the A-site of ribosomes during protein biosynthesis. The chain is Elongation factor Tu 1 from Orientia tsutsugamushi (strain Boryong) (Rickettsia tsutsugamushi).